A 150-amino-acid polypeptide reads, in one-letter code: Large ribosomal subunit protein uL15 (150 aa).

A disordered region spans residues 1–52 (MITLNTLKDSTRKRKPRKRVGRGIGSKHGKTCGRGEKGAGARSGYKRRLGKE). Residues 11-31 (TRKRKPRKRVGRGIGSKHGKT) are compositionally biased toward basic residues.

This sequence belongs to the universal ribosomal protein uL15 family. As to quaternary structure, part of the 50S ribosomal subunit.

Functionally, binds to the 23S rRNA. This chain is Large ribosomal subunit protein uL15, found in Protochlamydia amoebophila (strain UWE25).